We begin with the raw amino-acid sequence, 87 residues long: UPF0250 protein BUAPTUC7_482 (87 aa).

This sequence belongs to the UPF0250 family.

This Buchnera aphidicola subsp. Acyrthosiphon pisum (strain Tuc7) protein is UPF0250 protein BUAPTUC7_482.